We begin with the raw amino-acid sequence, 27 residues long: Endoglucanase gh5 (27 aa).

E6 functions as the Nucleophile in the catalytic mechanism.

It catalyses the reaction Endohydrolysis of (1-&gt;4)-beta-D-glucosidic linkages in cellulose, lichenin and cereal beta-D-glucans.. Its activity is regulated as follows. Activity is stimulated by zinc ions, potassium ions and DTT. Activity is inhibited by manganese and chloride ions. In terms of biological role, endoglucanase (EG) that cleaves the internal beta-1,4-glucosidic bonds in cellulose. The chain is Endoglucanase gh5 from Fomes meliae (Fomitopsis meliae).